The following is a 224-amino-acid chain: Transcription factor MYB1 (224 aa).

2 HTH myb-type domains span residues Leu-10–Ile-66 and Lys-67–His-117. 2 DNA-binding regions (H-T-H motif) span residues Trp-38–Leu-62 and Trp-90–Leu-113.

The protein resides in the nucleus. In terms of biological role, activates DODA1 and CYP76AD1 in the betalain red pigment pathway. The protein is Transcription factor MYB1 of Beta vulgaris (Sugar beet).